A 317-amino-acid chain; its full sequence is uncharacterized protein (317 aa).

A helical membrane pass occupies residues 11-31; it reads ALLLVIFGSLIVSFAIFFMVL. PASTA domains follow at residues 33-100, 101-174, and 180-241; these read NNEI…FISK, GAII…LISK, and DKHV…TIAK.

Its subcellular location is the membrane. This is an uncharacterized protein from Borreliella burgdorferi (strain ATCC 35210 / DSM 4680 / CIP 102532 / B31) (Borrelia burgdorferi).